A 121-amino-acid chain; its full sequence is Small ribosomal subunit protein uS13 (121 aa).

The disordered stretch occupies residues 93–121 (RGLPVRGQNTKNNARTRKGKATAIAGKKK). The segment covering 106–121 (ARTRKGKATAIAGKKK) has biased composition (basic residues).

It belongs to the universal ribosomal protein uS13 family. As to quaternary structure, part of the 30S ribosomal subunit. Forms a loose heterodimer with protein S19. Forms two bridges to the 50S subunit in the 70S ribosome.

Located at the top of the head of the 30S subunit, it contacts several helices of the 16S rRNA. In the 70S ribosome it contacts the 23S rRNA (bridge B1a) and protein L5 of the 50S subunit (bridge B1b), connecting the 2 subunits; these bridges are implicated in subunit movement. Contacts the tRNAs in the A and P-sites. In Streptococcus uberis (strain ATCC BAA-854 / 0140J), this protein is Small ribosomal subunit protein uS13.